Reading from the N-terminus, the 170-residue chain is dCTP pyrophosphatase 1 (170 aa).

Residues 1–27 are disordered; the sequence is MSVAGGEIRGDTGGEDTAAPGRFSFSP. Serine 2 carries the N-acetylserine modification. Phosphoserine is present on serine 2. A Phosphothreonine modification is found at threonine 12. Residues histidine 38 and 47-51 each bind substrate; that span reads WEQFH. 2 residues coordinate Mg(2+): glutamate 63 and glutamate 66. Tryptophan 73 serves as a coordination point for substrate. Serine 85 bears the Phosphoserine mark. Mg(2+) is bound by residues glutamate 95 and aspartate 98. Tyrosine 102 lines the substrate pocket. The interval 147–170 is disordered; it reads GAISEDQAVGPADIPCDSTGQTST.

As to quaternary structure, homotetramer. It depends on Mg(2+) as a cofactor.

It is found in the mitochondrion. The protein resides in the nucleus. Its subcellular location is the cytoplasm. It localises to the cytosol. The enzyme catalyses dCTP + H2O = dCMP + diphosphate + H(+). Inhibited by the reaction end product PPi. Inhibited by dCDP. Inhibited by triptolide. Hydrolyzes deoxynucleoside triphosphates (dNTPs) to the corresponding nucleoside monophosphates. Has a strong preference for dCTP and its analogs including 5-iodo-dCTP and 5-methyl-dCTP for which it may even have a higher efficiency. May protect DNA or RNA against the incorporation of these genotoxic nucleotide analogs through their catabolism. In Homo sapiens (Human), this protein is dCTP pyrophosphatase 1.